A 228-amino-acid polypeptide reads, in one-letter code: Glutamate transport system permease protein GluC (228 aa).

The next 5 membrane-spanning stretches (helical) occupy residues 16-36 (FWVT…FGTI), 64-84 (LTLV…LTLA), 100-120 (AVLG…RSGI), 145-165 (IIFP…LIAL), and 195-215 (LFVV…PMGL). The ABC transmembrane type-1 domain occupies 16-217 (FWVTIKLTIY…ILTLPMGLGL (202 aa)).

This sequence belongs to the binding-protein-dependent transport system permease family. HisMQ subfamily. As to quaternary structure, the complex is composed of two ATP-binding proteins (GluA), two transmembrane proteins (GluC and GluD) and a solute-binding protein (GluB).

The protein localises to the cell membrane. Part of the ABC transporter complex GluABCD involved in glutamate uptake. Probably responsible for the translocation of the substrate across the membrane. This is Glutamate transport system permease protein GluC from Corynebacterium glutamicum (strain ATCC 13032 / DSM 20300 / JCM 1318 / BCRC 11384 / CCUG 27702 / LMG 3730 / NBRC 12168 / NCIMB 10025 / NRRL B-2784 / 534).